Consider the following 652-residue polypeptide: DNA ligase (652 aa).

NAD(+) contacts are provided by residues 29-33 (DSEYD), 78-79 (SL), and E107. The active-site N6-AMP-lysine intermediate is the K109. R130, E164, K278, and K302 together coordinate NAD(+). Positions 395, 398, 413, and 418 each coordinate Zn(2+). The BRCT domain occupies 577–652 (VADAALSGLT…VRDEAWLESL (76 aa)).

It belongs to the NAD-dependent DNA ligase family. LigA subfamily. Mg(2+) serves as cofactor. Mn(2+) is required as a cofactor.

It catalyses the reaction NAD(+) + (deoxyribonucleotide)n-3'-hydroxyl + 5'-phospho-(deoxyribonucleotide)m = (deoxyribonucleotide)n+m + AMP + beta-nicotinamide D-nucleotide.. In terms of biological role, DNA ligase that catalyzes the formation of phosphodiester linkages between 5'-phosphoryl and 3'-hydroxyl groups in double-stranded DNA using NAD as a coenzyme and as the energy source for the reaction. It is essential for DNA replication and repair of damaged DNA. In Streptococcus pneumoniae (strain P1031), this protein is DNA ligase.